Here is a 186-residue protein sequence, read N- to C-terminus: uncharacterized protein (186 aa).

CBS domains lie at 10 to 69 (IMKK…KLPP) and 77 to 133 (ISSG…IIST).

This is an uncharacterized protein from Methanocaldococcus jannaschii (strain ATCC 43067 / DSM 2661 / JAL-1 / JCM 10045 / NBRC 100440) (Methanococcus jannaschii).